Consider the following 661-residue polypeptide: Probable urea active transporter 3 (661 aa).

Helical transmembrane passes span 13–33 (GIVIGLGFAFAIVMILVTYVL), 56–76 (GLISSAVVSSWTWPGTLLTSA), 86–106 (GSMWYSFAFTVQITFFTVIAL), 132–152 (AVFLFYALGTNIIVSAMLLLG), 165–185 (VVAAGFLLPLGVWLYTVSGGL), 197–217 (VIVYIVILITLFVAYTSSVHI), 251–271 (AVFVGWNIVIGGFATVFCDPS), 288–308 (YFAGGLAWLIVPWAMGSAAAL), 352–372 (AGVLILFMASTSATSAELVAF), 397–417 (VTHVFVTIFAVCMGALAVLFN), 419–439 (IGITISWIITFIGIALGPAVF), 454–474 (GMIIGCPMGSITGVVCWVGSC), 495–515 (VGNFTGLFSGLIYIVLISYFF), 556–576 (IGIFVSWIIFFILVIIVPLPM), and 591–611 (WIIVIIIWTLIAALYITFYPL).

This sequence belongs to the sodium:solute symporter (SSF) (TC 2.A.21) family.

It is found in the membrane. The protein resides in the golgi apparatus membrane. Its function is as follows. Involved in active transport of urea. In Schizosaccharomyces pombe (strain 972 / ATCC 24843) (Fission yeast), this protein is Probable urea active transporter 3 (dur3-3).